A 638-amino-acid chain; its full sequence is Adhesion G-protein coupled receptor F2 (638 aa).

Residues 1–25 (MISARWLYCLVLLLATESCRLFCQA) form the signal peptide. Residues 26–386 (ASKSKENVMP…ESPVLTYITY (361 aa)) lie on the Extracellular side of the membrane. Asparagine 155, asparagine 219, asparagine 248, asparagine 293, and asparagine 311 each carry an N-linked (GlcNAc...) asparagine glycan. The region spanning 233–377 (PRNSLGKNFT…SILMSPNTVE (145 aa)) is the GAIN-B domain. 2 disulfide bridges follow: cysteine 329–cysteine 356 and cysteine 344–cysteine 358. Residues 329-377 (CVGWHSLESRWDRRACKMIQENSRQAICRCQPNKFFTSFSILMSPNTVE) form a GPS region. A helical transmembrane segment spans residues 387-407 (IGLGISICSLIICLAIEALVW). Residues 408-422 (SQVTKTEISYLRHLC) lie on the Cytoplasmic side of the membrane. Residues 423–443 (IANIAVTLLMADVWFIVASFL) traverse the membrane as a helical segment. Residues 444–465 (SGPIVHHNGCVTATFFVHFFYL) are Extracellular-facing. Residues 466-486 (SVFFWMLAKALLILYGILIVF) traverse the membrane as a helical segment. Topologically, residues 487-493 (HTLPKSC) are cytoplasmic. Residues 494-514 (LVASLFTVGYGCPLVIAVITL) form a helical membrane-spanning segment. Over 515–541 (AVTEPGKGYLRPEACWLNWDMTKALLA) the chain is Extracellular. The chain crosses the membrane as a helical span at residues 542-562 (FVVPALAIVVVNLITVTLVII). The Cytoplasmic segment spans residues 563-586 (KTQRAAVGSSMFQEVRAIVRICKN). A helical transmembrane segment spans residues 587-607 (IAILTPLLGLTWGFGIATVVA). The Extracellular portion of the chain corresponds to 608–610 (GHS). Residues 611–631 (LAFHIIFSLLNALQVSPDAMI) form a helical membrane-spanning segment. Residues 632–638 (ESEWRGC) lie on the Cytoplasmic side of the membrane.

The protein belongs to the G-protein coupled receptor 2 family. Adhesion G-protein coupled receptor (ADGR) subfamily.

Its subcellular location is the membrane. Orphan receptor. In Rattus norvegicus (Rat), this protein is Adhesion G-protein coupled receptor F2 (Adgrf2).